The primary structure comprises 346 residues: Olfactory receptor 8G5 (346 aa).

Residues 1-60 are Extracellular-facing; that stretch reads MIIYKQGITFLQKENNNTIHLNTMFFLSPAETHQRMAAENHSFVTKFILVGLTEKSELQL. 2 N-linked (GlcNAc...) asparagine glycosylation sites follow: Asn16 and Asn40. A helical membrane pass occupies residues 61–81; it reads PLFLVFLGIYVVTVLGNLGMI. Residues 82–89 lie on the Cytoplasmic side of the membrane; sequence TLIGLSSH. Residues 90-110 form a helical membrane-spanning segment; it reads LHTPMYCFLSSLSFIDFCHST. Residues 111–134 lie on the Extracellular side of the membrane; it reads VITPKMLVNFVTEKNIISYPECMT. Residues Cys132 and Cys214 are joined by a disulfide bond. The helical transmembrane segment at 135-155 threads the bilayer; that stretch reads QLYFFLVFAIAECHMLAAMAY. Over 156-174 the chain is Cytoplasmic; sequence DGYVAICSPLLYSIIISNK. The chain crosses the membrane as a helical span at residues 175–195; the sequence is ACFSLILVVYVIGLICASAHI. The Extracellular segment spans residues 196–232; the sequence is GCMFRVQFCKFDVINHYFCDLISILKLSCSSTYINEL. A helical transmembrane segment spans residues 233-252; sequence LILIFSGINILVPSLTILSS. Over 253–272 the chain is Cytoplasmic; it reads YIFIIASILRIRYTEGRSKA. A helical transmembrane segment spans residues 273 to 293; that stretch reads FSTCSSHISAVSVFFGSAAFM. Residues 294 to 306 are Extracellular-facing; it reads YLQPSSVSSMDQG. Residues 307-327 form a helical membrane-spanning segment; the sequence is KVSSVFYTIVVPMLNPLIYSL. The Cytoplasmic portion of the chain corresponds to 328-346; the sequence is RNKDVHVALKKTLGKRTFL.

The protein belongs to the G-protein coupled receptor 1 family.

The protein localises to the cell membrane. Functionally, odorant receptor. This chain is Olfactory receptor 8G5 (OR8G5), found in Homo sapiens (Human).